Reading from the N-terminus, the 179-residue chain is Inner membrane-spanning protein YciB (179 aa).

5 helical membrane passes run 24 to 44 (TATGVLMAATVLQMGIIYAME), 49 to 69 (AMQKATLVLILLFGTLTLVLH), 76 to 96 (WKPTVLYGAMAIALAVALWAL), 121 to 141 (VAWIGYCLFMAAINGYVAAYF), and 151 to 171 (LWGYVFPIVFLVAQGLYISPH).

The protein belongs to the YciB family.

The protein resides in the cell inner membrane. Its function is as follows. Plays a role in cell envelope biogenesis, maintenance of cell envelope integrity and membrane homeostasis. The polypeptide is Inner membrane-spanning protein YciB (Variovorax paradoxus (strain S110)).